The sequence spans 232 residues: Enolase-phosphatase E1 (232 aa).

Belongs to the HAD-like hydrolase superfamily. MasA/MtnC family. In terms of assembly, monomer. Mg(2+) serves as cofactor.

The catalysed reaction is 5-methylsulfanyl-2,3-dioxopentyl phosphate + H2O = 1,2-dihydroxy-5-(methylsulfanyl)pent-1-en-3-one + phosphate. Its pathway is amino-acid biosynthesis; L-methionine biosynthesis via salvage pathway; L-methionine from S-methyl-5-thio-alpha-D-ribose 1-phosphate: step 3/6. The protein operates within amino-acid biosynthesis; L-methionine biosynthesis via salvage pathway; L-methionine from S-methyl-5-thio-alpha-D-ribose 1-phosphate: step 4/6. In terms of biological role, bifunctional enzyme that catalyzes the enolization of 2,3-diketo-5-methylthiopentyl-1-phosphate (DK-MTP-1-P) into the intermediate 2-hydroxy-3-keto-5-methylthiopentenyl-1-phosphate (HK-MTPenyl-1-P), which is then dephosphorylated to form the acireductone 1,2-dihydroxy-3-keto-5-methylthiopentene (DHK-MTPene). This is Enolase-phosphatase E1 from Xanthomonas axonopodis pv. citri (strain 306).